Consider the following 78-residue polypeptide: Large ribosomal subunit protein eL20 (78 aa).

The protein belongs to the eukaryotic ribosomal protein eL20 family. Part of the 50S ribosomal subunit. Binds 23S rRNA.

The chain is Large ribosomal subunit protein eL20 from Methanothermobacter thermautotrophicus (strain ATCC 29096 / DSM 1053 / JCM 10044 / NBRC 100330 / Delta H) (Methanobacterium thermoautotrophicum).